The primary structure comprises 690 residues: Molting protein mlt-10 (690 aa).

An N-terminal signal peptide occupies residues 1 to 18 (MRNLNLILFTALAAVTYA). Asparagine 42 and asparagine 204 each carry an N-linked (GlcNAc...) asparagine glycan. A coiled-coil region spans residues 219-285 (IKKLGEEAKR…MRKKEADEIR (67 aa)). Asparagine 305 and asparagine 415 each carry an N-linked (GlcNAc...) asparagine glycan. 5 helical membrane passes run 514 to 534 (PFIL…FIVL), 544 to 564 (LSPA…PLIL), 579 to 599 (FSPI…PGVF), 618 to 638 (VFTP…TPMV), and 643 to 663 (ILSP…FAVV).

It belongs to the mlt-10-like family. In terms of tissue distribution, expressed in the major body hypodermal syncytium (Hyp7), the dorsal and ventral ridges of the hypodermis, hypodermal cells in the head and tail, and the pharyngeal myoepithelium, but not the lateral seam cells.

The protein resides in the membrane. Its subcellular location is the secreted. In terms of biological role, required for the efficient removal of larval cuticles during the molting cycle as well as the synthesis of new cuticles. The polypeptide is Molting protein mlt-10 (Caenorhabditis elegans).